The sequence spans 338 residues: Fructose-1,6-bisphosphatase class 1 1 (338 aa).

Glutamate 94, aspartate 116, leucine 118, and aspartate 119 together coordinate Mg(2+). Residues 119 to 122, asparagine 210, and lysine 276 each bind substrate; that span reads DGSS. Mg(2+) is bound at residue glutamate 282.

It belongs to the FBPase class 1 family. In terms of assembly, homotetramer. Requires Mg(2+) as cofactor.

The protein localises to the cytoplasm. It carries out the reaction beta-D-fructose 1,6-bisphosphate + H2O = beta-D-fructose 6-phosphate + phosphate. It participates in carbohydrate biosynthesis; gluconeogenesis. This is Fructose-1,6-bisphosphatase class 1 1 from Paraburkholderia xenovorans (strain LB400).